The following is an 882-amino-acid chain: Putative HTH-type transcriptional regulator Mb0914c (882 aa).

One can recognise an HTH luxR-type domain in the interval 814–879; it reads PARGWGSLTP…QLVDEAARRG (66 aa). Residues 838–857 constitute a DNA-binding region (H-T-H motif); it reads NKDIAKRLFVSPRTVQTHLT.

This is Putative HTH-type transcriptional regulator Mb0914c from Mycobacterium bovis (strain ATCC BAA-935 / AF2122/97).